Consider the following 695-residue polypeptide: C6 finger domain transcription factor nscR (695 aa).

Positions 17 to 43 (CELCRERKVKCDKLDPCTNCASAGVVC) form a DNA-binding region, zn(2)-C6 fungal-type. Residues 101-113 (SMRSSASQSSNQD) show a composition bias toward low complexity. Residues 101-146 (SMRSSASQSSNQDQESRDAIESISNETEDASAPTPDSSRMPLGDGG) form a disordered region.

It is found in the nucleus. Functionally, transcription factor that specifically regulates the neosartoricin B biosynthesis gene cluster. The sequence is that of C6 finger domain transcription factor nscR from Arthroderma otae (strain ATCC MYA-4605 / CBS 113480) (Microsporum canis).